A 279-amino-acid polypeptide reads, in one-letter code: Probable ribosomal RNA small subunit methyltransferase A (279 aa).

S-adenosyl-L-methionine-binding residues include asparagine 23, leucine 25, glycine 50, glutamate 71, aspartate 95, and asparagine 110.

The protein belongs to the class I-like SAM-binding methyltransferase superfamily. rRNA adenine N(6)-methyltransferase family. RsmA subfamily.

The protein localises to the cytoplasm. Its function is as follows. Specifically dimethylates two adjacent adenosines in the loop of a conserved hairpin near the 3'-end of 16S rRNA in the 30S particle. May play a critical role in biogenesis of 30S subunits. This Thermococcus kodakarensis (strain ATCC BAA-918 / JCM 12380 / KOD1) (Pyrococcus kodakaraensis (strain KOD1)) protein is Probable ribosomal RNA small subunit methyltransferase A.